The following is a 166-amino-acid chain: Large ribosomal subunit protein uL10 (166 aa).

It belongs to the universal ribosomal protein uL10 family. In terms of assembly, part of the ribosomal stalk of the 50S ribosomal subunit. The N-terminus interacts with L11 and the large rRNA to form the base of the stalk. The C-terminus forms an elongated spine to which L12 dimers bind in a sequential fashion forming a multimeric L10(L12)X complex.

In terms of biological role, forms part of the ribosomal stalk, playing a central role in the interaction of the ribosome with GTP-bound translation factors. In Pseudomonas syringae pv. tomato (strain ATCC BAA-871 / DC3000), this protein is Large ribosomal subunit protein uL10.